The primary structure comprises 215 residues: Flagellin B1 (215 aa).

The propeptide occupies 1–12 (MSVKNFMNNKKG).

The protein belongs to the archaeal flagellin family.

It is found in the archaeal flagellum. In terms of biological role, flagellin is the subunit protein which polymerizes to form the filaments of archaeal flagella. The polypeptide is Flagellin B1 (flaB1) (Methanococcus vannielii (strain ATCC 35089 / DSM 1224 / JCM 13029 / OCM 148 / SB)).